We begin with the raw amino-acid sequence, 918 residues long: Protein translocase subunit SecA (918 aa).

ATP contacts are provided by residues Gln-87, 105–109 (GEGKT), and Asp-494. Over residues 863–883 (KQDDTSPKEYKKIGQEQRAEV) the composition is skewed to basic and acidic residues. The segment at 863 to 918 (KQDDTSPKEYKKIGQEQRAEVDMFGNELKSNKTKPQVSSTTSSGGGSERRSSRRKK) is disordered.

The protein belongs to the SecA family. As to quaternary structure, monomer and homodimer. Part of the essential Sec protein translocation apparatus which comprises SecA, SecYEG and auxiliary proteins SecDF. Other proteins may also be involved.

The protein resides in the cell inner membrane. It is found in the cytoplasm. The enzyme catalyses ATP + H2O + cellular proteinSide 1 = ADP + phosphate + cellular proteinSide 2.. Part of the Sec protein translocase complex. Interacts with the SecYEG preprotein conducting channel. Has a central role in coupling the hydrolysis of ATP to the transfer of proteins into and across the cell membrane, serving as an ATP-driven molecular motor driving the stepwise translocation of polypeptide chains across the membrane. The polypeptide is Protein translocase subunit SecA (Leptospira biflexa serovar Patoc (strain Patoc 1 / Ames)).